The chain runs to 761 residues: Protein ACTIVITY OF BC1 COMPLEX KINASE 8, chloroplastic (761 aa).

The N-terminal 57 residues, 1-57, are a transit peptide targeting the chloroplast; sequence MATSSSSSSSLLLPNINFNSRQSPTITRSVSIAGIFLPRNRLSYNHNLRIRTRLIRA. The region spanning 288-648 is the Protein kinase domain; it reads RFDYEPIAAA…VKDLRKRWDR (361 aa). Residues 294–302 and K315 each bind ATP; that span reads IAAASLGQV. Catalysis depends on D452, which acts as the Proton acceptor. The helical transmembrane segment at 725-745 threads the bilayer; that stretch reads PATIAYTVCAFFSLQVLIGII.

Belongs to the protein kinase superfamily. ADCK protein kinase family. As to expression, mostly expressed in leaves and flowers, and, to a lower extent, in stems, siliques and roots.

It is found in the plastid. Its subcellular location is the chloroplast envelope. The protein localises to the chloroplast membrane. It carries out the reaction L-seryl-[protein] + ATP = O-phospho-L-seryl-[protein] + ADP + H(+). The catalysed reaction is L-threonyl-[protein] + ATP = O-phospho-L-threonyl-[protein] + ADP + H(+). Its function is as follows. Involved in resistance to oxidative stress (e.g. hydrogen peroxide H(2)O(2)), high light and heavy metals (e.g. cadmium ions Cd(2+)). Influences responses to reactive oxygen species (ROS) production. Together with SIA1, regulates iron distribution within the chloroplast and mediates the oxidative stress response. Together with ABC1K7, influences chloroplast lipid synthesis/accumulation and modulates chloroplast membrane composition in response to stress. This chain is Protein ACTIVITY OF BC1 COMPLEX KINASE 8, chloroplastic, found in Arabidopsis thaliana (Mouse-ear cress).